Here is a 337-residue protein sequence, read N- to C-terminus: Peroxidase 14 (337 aa).

Residues 1–22 (MARIGSFLILLSLTYALTLCIC) form the signal peptide. A glycan (N-linked (GlcNAc...) asparagine) is linked at asparagine 24. Disulfide bonds link cysteine 44-cysteine 124, cysteine 77-cysteine 82, cysteine 130-cysteine 331, and cysteine 209-cysteine 241. Histidine 75 functions as the Proton acceptor in the catalytic mechanism. Residues aspartate 76, valine 79, glycine 81, aspartate 83, and serine 85 each contribute to the Ca(2+) site. A substrate-binding site is contributed by proline 172. N-linked (GlcNAc...) asparagine glycosylation occurs at asparagine 191. Histidine 202 lines the heme b pocket. A Ca(2+)-binding site is contributed by threonine 203. N-linked (GlcNAc...) asparagine glycosylation is found at asparagine 218 and asparagine 249. Ca(2+) contacts are provided by aspartate 254, serine 257, and aspartate 262.

It belongs to the peroxidase family. Classical plant (class III) peroxidase subfamily. The cofactor is heme b. Requires Ca(2+) as cofactor.

The protein localises to the secreted. It carries out the reaction 2 a phenolic donor + H2O2 = 2 a phenolic radical donor + 2 H2O. Functionally, removal of H(2)O(2), oxidation of toxic reductants, biosynthesis and degradation of lignin, suberization, auxin catabolism, response to environmental stresses such as wounding, pathogen attack and oxidative stress. These functions might be dependent on each isozyme/isoform in each plant tissue. This is Peroxidase 14 (PER14) from Arabidopsis thaliana (Mouse-ear cress).